A 67-amino-acid chain; its full sequence is Large ribosomal subunit protein uL29 (67 aa).

The protein belongs to the universal ribosomal protein uL29 family.

The protein is Large ribosomal subunit protein uL29 of Wolbachia pipientis wMel.